The sequence spans 113 residues: Retrotransposon Gag-like protein 8A (113 aa).

This sequence belongs to the FAM127 family.

This Homo sapiens (Human) protein is Retrotransposon Gag-like protein 8A.